Here is a 68-residue protein sequence, read N- to C-terminus: DNA-directed RNA polymerase subunit omega (68 aa).

This sequence belongs to the RNA polymerase subunit omega family. As to quaternary structure, the RNAP catalytic core consists of 2 alpha, 1 beta, 1 beta' and 1 omega subunit. When a sigma factor is associated with the core the holoenzyme is formed, which can initiate transcription.

The catalysed reaction is RNA(n) + a ribonucleoside 5'-triphosphate = RNA(n+1) + diphosphate. Its function is as follows. Promotes RNA polymerase assembly. Latches the N- and C-terminal regions of the beta' subunit thereby facilitating its interaction with the beta and alpha subunits. This Citrifermentans bemidjiense (strain ATCC BAA-1014 / DSM 16622 / JCM 12645 / Bem) (Geobacter bemidjiensis) protein is DNA-directed RNA polymerase subunit omega.